We begin with the raw amino-acid sequence, 235 residues long: Enolase-phosphatase E1 (235 aa).

Positions 10 and 12 each coordinate Mg(2+). Residues 130–131 (SS) and Lys169 each bind substrate. Asp194 contacts Mg(2+).

Belongs to the HAD-like hydrolase superfamily. MasA/MtnC family. In terms of assembly, monomer. Mg(2+) serves as cofactor.

Its subcellular location is the cytoplasm. It localises to the nucleus. It carries out the reaction 5-methylsulfanyl-2,3-dioxopentyl phosphate + H2O = 1,2-dihydroxy-5-(methylsulfanyl)pent-1-en-3-one + phosphate. Its pathway is amino-acid biosynthesis; L-methionine biosynthesis via salvage pathway; L-methionine from S-methyl-5-thio-alpha-D-ribose 1-phosphate: step 3/6. It participates in amino-acid biosynthesis; L-methionine biosynthesis via salvage pathway; L-methionine from S-methyl-5-thio-alpha-D-ribose 1-phosphate: step 4/6. In terms of biological role, bifunctional enzyme that catalyzes the enolization of 2,3-diketo-5-methylthiopentyl-1-phosphate (DK-MTP-1-P) into the intermediate 2-hydroxy-3-keto-5-methylthiopentenyl-1-phosphate (HK-MTPenyl-1-P), which is then dephosphorylated to form the acireductone 1,2-dihydroxy-3-keto-5-methylthiopentene (DHK-MTPene). This chain is Enolase-phosphatase E1, found in Komagataella phaffii (strain GS115 / ATCC 20864) (Yeast).